The primary structure comprises 495 residues: Lysine--tRNA ligase (495 aa).

The Mg(2+) site is built by Glu406 and Glu413.

Belongs to the class-II aminoacyl-tRNA synthetase family. Homodimer. Mg(2+) is required as a cofactor.

The protein localises to the cytoplasm. It catalyses the reaction tRNA(Lys) + L-lysine + ATP = L-lysyl-tRNA(Lys) + AMP + diphosphate. The chain is Lysine--tRNA ligase from Staphylococcus aureus (strain MRSA252).